A 173-amino-acid chain; its full sequence is MKKHRKKRSSSTQVQALAQHICMSAHKARRVIDQIRGRSYEKTLMLLELMPYRASYPILKLVYSAAANASHNKGFNKADLVISQAEVNGGTIIKKLKPRARGHSYPIKRPTCHINIVLKDQSKTKTQQDFVLENKGVFKDTIIERYPEKEREREREINFFKRLLRFPNWNRDK.

Belongs to the universal ribosomal protein uL22 family. Part of the 50S ribosomal subunit.

It is found in the plastid. It localises to the chloroplast. In terms of biological role, this protein binds specifically to 23S rRNA. The globular domain of the protein is located near the polypeptide exit tunnel on the outside of the subunit, while an extended beta-hairpin is found that lines the wall of the exit tunnel in the center of the 70S ribosome. The sequence is that of Large ribosomal subunit protein uL22c (rpl22) from Drimys granadensis.